Reading from the N-terminus, the 1264-residue chain is P-type sodium-transporting ATPase4 (1264 aa).

Residues 1 to 12 are compositionally biased toward polar residues; it reads MSSQNNNKQGGQ. Residues 1–102 are disordered; sequence MSSQNNNKQG…INGEKNDDNN (102 aa). Composition is skewed to basic and acidic residues over residues 15 to 42 and 50 to 64; these read NNKKDSDDIKPSVSKEDLINSLKNDELN and NDMKKNENMNIKKNE. 8 helical membrane-spanning segments follow: residues 165–185, 186–206, 359–379, 393–413, 923–943, 1006–1026, 1203–1223, and 1226–1246; these read VWLIFLSQYCSPVVLLLLVAA, VASLALNEVVEGVAIISIVTL, GLIGLIAIIVLVVIISLAVII, FVIIIIGVGFAVSSIPEGLPM, FVCFLLGTNIGEIIYLSVAIV, IFEALCVLLSLAFSLYICTGF, CSISATLTFLSTCIPGITSIL, and TCLLWWQYLLAIFWALLNLFL.

The protein belongs to the cation transport ATPase (P-type) (TC 3.A.3) family.

It localises to the cell membrane. The enzyme catalyses Na(+)(in) + ATP + H2O = Na(+)(out) + ADP + phosphate + H(+). Its activity is regulated as follows. Inhibited by cipargamin and other spiroindolone compounds. Inhibited by 4-cyano-3-methylisoquinoline derivatives MB14 and MB10 but not RK18. Inhibited by (+)-SJ733, a dihydroisoquinolone compound. In terms of biological role, sodium-exporting ATPase. Required for the extrusion of Na(+) from the intraerythrocytic parasites to maintain a low cytosolic concentration of Na(+). In Plasmodium falciparum (isolate 3D7), this protein is P-type sodium-transporting ATPase4.